Here is a 328-residue protein sequence, read N- to C-terminus: Phosphate acyltransferase (328 aa).

It belongs to the PlsX family. As to quaternary structure, homodimer. Probably interacts with PlsY.

The protein resides in the cytoplasm. The catalysed reaction is a fatty acyl-[ACP] + phosphate = an acyl phosphate + holo-[ACP]. It participates in lipid metabolism; phospholipid metabolism. Functionally, catalyzes the reversible formation of acyl-phosphate (acyl-PO(4)) from acyl-[acyl-carrier-protein] (acyl-ACP). This enzyme utilizes acyl-ACP as fatty acyl donor, but not acyl-CoA. This Campylobacter jejuni subsp. doylei (strain ATCC BAA-1458 / RM4099 / 269.97) protein is Phosphate acyltransferase.